Reading from the N-terminus, the 224-residue chain is 7-cyano-7-deazaguanine synthase (224 aa).

Position 10-20 (10-20 (FSGGQDSTTCL)) interacts with ATP. 4 residues coordinate Zn(2+): Cys-193, Cys-201, Cys-204, and Cys-207.

The protein belongs to the QueC family. The cofactor is Zn(2+).

It catalyses the reaction 7-carboxy-7-deazaguanine + NH4(+) + ATP = 7-cyano-7-deazaguanine + ADP + phosphate + H2O + H(+). The protein operates within purine metabolism; 7-cyano-7-deazaguanine biosynthesis. Functionally, catalyzes the ATP-dependent conversion of 7-carboxy-7-deazaguanine (CDG) to 7-cyano-7-deazaguanine (preQ(0)). This is 7-cyano-7-deazaguanine synthase from Neisseria gonorrhoeae (strain ATCC 700825 / FA 1090).